A 394-amino-acid chain; its full sequence is Alanine--glyoxylate aminotransferase (394 aa).

Pyridoxal 5'-phosphate contacts are provided by residues 76–78 (AGH), Ser153, and Gln204. Ser153 contributes to the substrate binding site. The residue at position 205 (Lys205) is an N6-(pyridoxal phosphate)lysine. The pyridoxal 5'-phosphate site is built by Tyr256 and Thr259. Residue Arg356 participates in substrate binding.

It belongs to the class-V pyridoxal-phosphate-dependent aminotransferase family. Homodimer. Pyridoxal 5'-phosphate serves as cofactor.

It is found in the peroxisome. It catalyses the reaction glyoxylate + L-alanine = glycine + pyruvate. It carries out the reaction (2S)-2-aminobutanoate + glyoxylate = 2-oxobutanoate + glycine. The enzyme catalyses glyoxylate + L-phenylalanine = 3-phenylpyruvate + glycine. The catalysed reaction is glyoxylate + L-serine = 3-hydroxypyruvate + glycine. It catalyses the reaction 2-oxobutanoate + L-alanine = (2S)-2-aminobutanoate + pyruvate. It carries out the reaction L-phenylalanine + pyruvate = 3-phenylpyruvate + L-alanine. The enzyme catalyses L-serine + pyruvate = 3-hydroxypyruvate + L-alanine. Catalyzes the pyridoxal 5'-phosphate-dependent transamination of alanine with glyoxylate as an amino group acceptor. Can also catalyze, although with much less efficiency, the transamination of amino-butyrate, phenylalanine and serine with glyoxylate or pyruvate as an amino group acceptor. Does not catalyze the transamination of both 3-hydroxykynurenine and L-kynurenine. May play a role in the detoxification of glyoxylate, a toxic plant metabolite from the fly diet. The sequence is that of Alanine--glyoxylate aminotransferase from Drosophila melanogaster (Fruit fly).